Here is a 251-residue protein sequence, read N- to C-terminus: tRNA-cytidine(32) 2-sulfurtransferase 1 (251 aa).

The PP-loop motif signature appears at 33-38; that stretch reads SGGKDS. Cys108, Cys111, and Cys199 together coordinate [4Fe-4S] cluster.

Belongs to the TtcA family. Homodimer. The cofactor is Mg(2+). [4Fe-4S] cluster serves as cofactor.

It localises to the cytoplasm. The enzyme catalyses cytidine(32) in tRNA + S-sulfanyl-L-cysteinyl-[cysteine desulfurase] + AH2 + ATP = 2-thiocytidine(32) in tRNA + L-cysteinyl-[cysteine desulfurase] + A + AMP + diphosphate + H(+). It participates in tRNA modification. Catalyzes the ATP-dependent 2-thiolation of cytidine in position 32 of tRNA, to form 2-thiocytidine (s(2)C32). The sulfur atoms are provided by the cysteine/cysteine desulfurase (IscS) system. This is tRNA-cytidine(32) 2-sulfurtransferase 1 from Francisella tularensis subsp. holarctica (strain FTNF002-00 / FTA).